A 483-amino-acid polypeptide reads, in one-letter code: MKAFHTFCVVLLVFGSVSEAKFDDFEDEEDIVEYDDNDFAEFEDVMEDSVTESPQRVIITEDDEDETTVELEGQDENQEGDFEDADTQEGDTESEPYDDEEFEGYEDKPDTSSSKNKDPITIVDVPAHLQNSWESYYLEILMVTGLLAYIMNYIIGKNKNSRLAQAWFNTHRELLESNFTLVGDDGTNKEATSTGKLNQENEHIYNLWCSGRVCCEGMLIQLRFLKRQDLLNVLARMMRPVSDQVQIKVTMNDEDMETYVFAVGTRKALVRLQKEMQDLSEFCSDKPKSGAKYGLPDSLAILSEMGEVTDGMMDTKMVHFLTHYADKIESVHFSDQFSGPKIMQEEGQPLKLPDTKRTLLFTFNVPGSGNTYPKDMEALLPLMNMVIYSIDKAKKFRLNREGKQKADKNRARVEENFLKLTHVQRQEAAQSRREEKKRAEKERIMNEEDPEKQRRLEEAALRRDQKKLEKKQMKMKQIKVKAM.

The N-terminal stretch at 1 to 20 (MKAFHTFCVVLLVFGSVSEA) is a signal peptide. Over 21-135 (KFDDFEDEED…PAHLQNSWES (115 aa)) the chain is Cytoplasmic. The segment at 46–118 (MEDSVTESPQ…PDTSSSKNKD (73 aa)) is disordered. Acidic residues predominate over residues 60-104 (TEDDEDETTVELEGQDENQEGDFEDADTQEGDTESEPYDDEEFEG). Basic and acidic residues predominate over residues 105–118 (YEDKPDTSSSKNKD). Residues 136–155 (YYLEILMVTGLLAYIMNYII) form a helical membrane-spanning segment. At 156 to 483 (GKNKNSRLAQ…KMKQIKVKAM (328 aa)) the chain is on the lumenal side. An N-linked (GlcNAc...) asparagine glycan is attached at Asn-178. The tract at residues 424-483 (QRQEAAQSRREEKKRAEKERIMNEEDPEKQRRLEEAALRRDQKKLEKKQMKMKQIKVKAM) is disordered. Positions 430–472 (QSRREEKKRAEKERIMNEEDPEKQRRLEEAALRRDQKKLEKKQ) are enriched in basic and acidic residues. Residues 451-481 (EKQRRLEEAALRRDQKKLEKKQMKMKQIKVK) adopt a coiled-coil conformation. Positions 473–483 (MKMKQIKVKAM) are enriched in basic residues.

This sequence belongs to the CCDC47 family. In terms of assembly, component of the PAT complex, composed of WDR83OS/Asterix and CCDC47. The PAT complex is part of the multi-pass translocon (MPT) complex, composed of three subcomplexes, the GEL complex (composed of RAB5IF/OPTI and TMCO1), the BOS complex (composed of NCLN/Nicalin, NOMO1 and TMEM147) and the PAT complex (composed of WDR83OS/Asterix and CCDC47). The MPT complex associates with the SEC61 complex. Interacts with VCP, HSPA5, DERL1, DERL2 and SELENOS.

The protein localises to the endoplasmic reticulum membrane. The protein resides in the rough endoplasmic reticulum membrane. Its function is as follows. Component of the multi-pass translocon (MPT) complex that mediates insertion of multi-pass membrane proteins into the lipid bilayer of membranes. The MPT complex takes over after the SEC61 complex: following membrane insertion of the first few transmembrane segments of proteins by the SEC61 complex, the MPT complex occludes the lateral gate of the SEC61 complex to promote insertion of subsequent transmembrane regions. Within the MPT complex, the PAT subcomplex sequesters any highly polar regions in the transmembrane domains away from the non-polar membrane environment until they can be buried in the interior of the fully assembled protein. Within the PAT subcomplex, CCDC47 occludes the lateral gate of the SEC61 complex. Involved in the regulation of calcium ion homeostasis in the ER. Required for proper protein degradation via the ERAD (ER-associated degradation) pathway. Has an essential role in the maintenance of ER organization during embryogenesis. The protein is PAT complex subunit CCDC47 (CCDC47) of Pongo abelii (Sumatran orangutan).